A 113-amino-acid polypeptide reads, in one-letter code: Large ribosomal subunit protein bL17 (113 aa).

It belongs to the bacterial ribosomal protein bL17 family. In terms of assembly, part of the 50S ribosomal subunit. Contacts protein L32.

The sequence is that of Large ribosomal subunit protein bL17 from Caldicellulosiruptor bescii (strain ATCC BAA-1888 / DSM 6725 / KCTC 15123 / Z-1320) (Anaerocellum thermophilum).